Consider the following 101-residue polypeptide: Pollen allergen Amb a 3 (101 aa).

In terms of domain architecture, Phytocyanin spans 2-101; it reads KVYLVGGPEL…QKFVACVPGR (100 aa). A glycan (N-linked (GlcNAc...) asparagine) is linked at N41. The cysteines at positions 61 and 88 are disulfide-linked. S84 is a glycosylation site (O-linked (Hex) serine). C97 carries the cysteine derivative modification. R101 is subject to Blocked carboxyl end (Arg).

The identity of the saccharide is not reported. The sugar attached to Ser-84 is represented simply as Hex. Post-translationally, cys-97 sulfhydryl group is modified but does not form an interchain disulfide bond.

The polypeptide is Pollen allergen Amb a 3 (Ambrosia artemisiifolia var. elatior (Short ragweed)).